The following is a 328-amino-acid chain: Octanoyltransferase, mitochondrial (328 aa).

The BPL/LPL catalytic domain occupies 108–312 (MKPNPIILTF…EMTKLLGIKT (205 aa)). Substrate contacts are provided by residues 162–169 (RGGQVTFH), 241–243 (SVG), and 254–256 (GVA). Cys272 (acyl-thioester intermediate) is an active-site residue.

Belongs to the LipB family.

The protein resides in the mitochondrion. It catalyses the reaction octanoyl-[ACP] + L-lysyl-[protein] = N(6)-octanoyl-L-lysyl-[protein] + holo-[ACP] + H(+). The protein operates within protein modification; protein lipoylation via endogenous pathway; protein N(6)-(lipoyl)lysine from octanoyl-[acyl-carrier-protein]: step 1/2. Its function is as follows. Catalyzes the transfer of endogenously produced octanoic acid from octanoyl-acyl-carrier-protein onto the lipoyl domains of lipoate-dependent enzymes. Lipoyl-ACP can also act as a substrate although octanoyl-ACP is likely to be the physiological substrate. The polypeptide is Octanoyltransferase, mitochondrial (LIP2) (Saccharomyces cerevisiae (strain ATCC 204508 / S288c) (Baker's yeast)).